A 182-amino-acid chain; its full sequence is MGLGQGGGLAQRGTFAEGLKNDVVVVALSPGRRHLTKPVCEITYGIRESGIQTSVQVLNAGSGLPADAPNSLGSTFGLKPEEVEQVNRHKLCIIHFGNVKSHVVYKARLFLRFVTILTIVVCQTPIDMEDFAKIGIKTADVIPIEPKTKGTIVEIVTGVVRGESSPQSKIDEIIEKIKKHLK.

MCR is composed of three subunits: alpha, beta, and gamma. The function of proteins C and D is not known.

The sequence is that of Methyl-coenzyme M reductase operon protein C (mcrC) from Methanococcus voltae.